Consider the following 217-residue polypeptide: MYFQIAIDGPSSSGKSSVAKTVARQLGFEYFSTGKMYRAFAYVMQVNRLDVNLLLKVINQINWRFEHEKVFYNNADISEVILNQEIAQLASNLATNPEVRKMAVLRQQALAKNTNIVMDGRDIGTVVLKDAQLKYFLDAKPEIRAQRRAQDLGIAYDSDKAFQELVAEIKHRDAVDTSRTADPLVQAPDAIYIDSSNLTFQQVVELMVQQARTVFKL.

9-17 (GPSSSGKSS) serves as a coordination point for ATP.

The protein belongs to the cytidylate kinase family. Type 1 subfamily.

It is found in the cytoplasm. It catalyses the reaction CMP + ATP = CDP + ADP. The catalysed reaction is dCMP + ATP = dCDP + ADP. In Mycoplasma pneumoniae (strain ATCC 29342 / M129 / Subtype 1) (Mycoplasmoides pneumoniae), this protein is Cytidylate kinase.